A 556-amino-acid polypeptide reads, in one-letter code: 2-succinyl-5-enolpyruvyl-6-hydroxy-3-cyclohexene-1-carboxylate synthase (556 aa).

This sequence belongs to the TPP enzyme family. MenD subfamily. In terms of assembly, homodimer. Requires Mg(2+) as cofactor. Mn(2+) is required as a cofactor. Thiamine diphosphate serves as cofactor.

It catalyses the reaction isochorismate + 2-oxoglutarate + H(+) = 5-enolpyruvoyl-6-hydroxy-2-succinyl-cyclohex-3-ene-1-carboxylate + CO2. It participates in quinol/quinone metabolism; 1,4-dihydroxy-2-naphthoate biosynthesis; 1,4-dihydroxy-2-naphthoate from chorismate: step 2/7. Its pathway is quinol/quinone metabolism; menaquinone biosynthesis. Functionally, catalyzes the thiamine diphosphate-dependent decarboxylation of 2-oxoglutarate and the subsequent addition of the resulting succinic semialdehyde-thiamine pyrophosphate anion to isochorismate to yield 2-succinyl-5-enolpyruvyl-6-hydroxy-3-cyclohexene-1-carboxylate (SEPHCHC). This Salmonella gallinarum (strain 287/91 / NCTC 13346) protein is 2-succinyl-5-enolpyruvyl-6-hydroxy-3-cyclohexene-1-carboxylate synthase.